Here is a 405-residue protein sequence, read N- to C-terminus: L-rhamnonate dehydratase (405 aa).

Substrate-binding residues include H33 and R59. D226, E252, and E280 together coordinate Mg(2+). H329 functions as the Proton acceptor in the catalytic mechanism. A substrate-binding site is contributed by E349.

This sequence belongs to the mandelate racemase/muconate lactonizing enzyme family. RhamD subfamily. As to quaternary structure, homooctamer; tetramer of dimers. Mg(2+) is required as a cofactor.

It catalyses the reaction L-rhamnonate = 2-dehydro-3-deoxy-L-rhamnonate + H2O. Catalyzes the dehydration of L-rhamnonate to 2-keto-3-deoxy-L-rhamnonate (KDR). The protein is L-rhamnonate dehydratase of Salmonella typhi.